Consider the following 445-residue polypeptide: Glycine betaine monooxygenase oxygenase subunit (445 aa).

Residues 73 to 180 (WLFVGMTCEI…VTHAGGFLFV (108 aa)) enclose the Rieske domain. Positions 115, 117, 135, and 138 each coordinate [2Fe-2S] cluster. Fe cation is bound by residues His234 and His239.

The protein belongs to the bacterial ring-hydroxylating dioxygenase alpha subunit family. As to quaternary structure, homotrimer. The system is composed of an oxygenase subunit (BmoA) and a reductase subunit (BmoB). Maximal specific activity is obtained when the ratio of BmoA to BmoB is 5:1. [2Fe-2S] cluster serves as cofactor. Requires Fe cation as cofactor.

The catalysed reaction is glycine betaine + NADH + O2 + H(+) = N,N-dimethylglycine + formaldehyde + NAD(+) + H2O. Its activity is regulated as follows. Activity is absolutely dependent on the presence of BmoB. Glycine betaine monooxygenase activity is significantly enhanced by Fe(2+) and severely inhibited by heavy-metal ions, including Co(2+), Mn(2+), Zn(2+), Cu(2+) and Ag(+). Severely inhibited by EDTA. Its function is as follows. Involved in degradation of glycine betaine. Part of a Rieske-type oxygenase system that catalyzes the conversion of glycine betaine (GB) to dimethylglycine (DMG). This subunit is the terminal oxygenase component of the system. Is specific for GB, and does not show any activity on choline, L-carnitine, stachydrine, dimethylglycine or sarcosine. Activity is strictly dependent on NADH. The polypeptide is Glycine betaine monooxygenase oxygenase subunit (Chromohalobacter salexigens (strain ATCC BAA-138 / DSM 3043 / CIP 106854 / NCIMB 13768 / 1H11)).